We begin with the raw amino-acid sequence, 609 residues long: Major facilitator superfamily domain-containing protein 6-like protein A (609 aa).

The next 2 helical transmembrane spans lie at 41–61 and 78–98; these read LGLG…VHLL and FFIM…AYYP. Residues 201–241 form a disordered region; the sequence is SGKAQKVMSSKSAASNSKQRSSLNNHTSPYATHPNVSHHPS. Positions 207-230 are enriched in polar residues; that stretch reads VMSSKSAASNSKQRSSLNNHTSPY. A run of 9 helical transmembrane segments spans residues 265–285, 307–327, 340–360, 388–408, 420–440, 452–472, 475–495, 513–535, and 541–561; these read IFLI…PLEW, LWIW…FLVD, VFFH…LSTL, IVLT…TQNF, ELYM…LYFF, WMVA…SFLW, WSVL…WWAI, LALR…GFII, and AVLY…FLLV.

This sequence belongs to the major facilitator superfamily. MFSD6 family.

It localises to the membrane. The chain is Major facilitator superfamily domain-containing protein 6-like protein A (mfsd6l-a) from Xenopus laevis (African clawed frog).